The sequence spans 133 residues: ATP synthase epsilon chain (133 aa).

Belongs to the ATPase epsilon chain family. F-type ATPases have 2 components, CF(1) - the catalytic core - and CF(0) - the membrane proton channel. CF(1) has five subunits: alpha(3), beta(3), gamma(1), delta(1), epsilon(1). CF(0) has three main subunits: a, b and c.

It localises to the cell membrane. Produces ATP from ADP in the presence of a proton gradient across the membrane. This is ATP synthase epsilon chain from Bacillus cytotoxicus (strain DSM 22905 / CIP 110041 / 391-98 / NVH 391-98).